Consider the following 500-residue polypeptide: L-arabinose isomerase (500 aa).

Mn(2+) contacts are provided by Glu306, Glu333, His350, and His450.

The protein belongs to the arabinose isomerase family. In terms of assembly, homohexamer. Mn(2+) serves as cofactor.

The enzyme catalyses beta-L-arabinopyranose = L-ribulose. Its pathway is carbohydrate degradation; L-arabinose degradation via L-ribulose; D-xylulose 5-phosphate from L-arabinose (bacterial route): step 1/3. In terms of biological role, catalyzes the conversion of L-arabinose to L-ribulose. The polypeptide is L-arabinose isomerase (Yersinia pseudotuberculosis serotype I (strain IP32953)).